Consider the following 208-residue polypeptide: Methylthioribulose-1-phosphate dehydratase (208 aa).

Zn(2+) is bound by residues histidine 98 and histidine 100.

It belongs to the aldolase class II family. MtnB subfamily. It depends on Zn(2+) as a cofactor.

It carries out the reaction 5-(methylsulfanyl)-D-ribulose 1-phosphate = 5-methylsulfanyl-2,3-dioxopentyl phosphate + H2O. Its pathway is amino-acid biosynthesis; L-methionine biosynthesis via salvage pathway; L-methionine from S-methyl-5-thio-alpha-D-ribose 1-phosphate: step 2/6. Its function is as follows. Catalyzes the dehydration of methylthioribulose-1-phosphate (MTRu-1-P) into 2,3-diketo-5-methylthiopentyl-1-phosphate (DK-MTP-1-P). The polypeptide is Methylthioribulose-1-phosphate dehydratase (Marinobacter nauticus (strain ATCC 700491 / DSM 11845 / VT8) (Marinobacter aquaeolei)).